Reading from the N-terminus, the 257-residue chain is Achaete-scute complex protein T3 (257 aa).

A bHLH domain is found at 83–145 (PSVARRNARE…RIAVEYIRGL (63 aa)). Residues 161–221 (YNSADESSND…SEISGGGYIK (61 aa)) form a disordered region. Low complexity-rich tracts occupy residues 165-184 (DESS…LDSS) and 193-213 (QSAQ…SGSE).

In terms of assembly, efficient DNA binding requires dimerization with another bHLH protein. L(1)SC, SC and AC strongly label the presumptive stomatogastric nervous system, while ASE is more prominent in the presumptive procephalic lobe.

In terms of biological role, AS-C proteins are involved in the determination of the neuronal precursors in the peripheral nervous system and the central nervous system. The sequence is that of Achaete-scute complex protein T3 (l(1)sc) from Drosophila melanogaster (Fruit fly).